The sequence spans 196 residues: Molybdenum cofactor guanylyltransferase (196 aa).

GTP-binding positions include 12–14, lysine 25, asparagine 53, aspartate 71, and aspartate 101; that span reads LAG. Residue aspartate 101 participates in Mg(2+) binding.

The protein belongs to the MobA family. As to quaternary structure, monomer. It depends on Mg(2+) as a cofactor.

The protein localises to the cytoplasm. It carries out the reaction Mo-molybdopterin + GTP + H(+) = Mo-molybdopterin guanine dinucleotide + diphosphate. Transfers a GMP moiety from GTP to Mo-molybdopterin (Mo-MPT) cofactor (Moco or molybdenum cofactor) to form Mo-molybdopterin guanine dinucleotide (Mo-MGD) cofactor. This is Molybdenum cofactor guanylyltransferase from Bordetella petrii (strain ATCC BAA-461 / DSM 12804 / CCUG 43448).